The sequence spans 526 residues: ATP synthase subunit alpha (526 aa).

Residue 171 to 178 (GDRQTGKT) coordinates ATP.

Belongs to the ATPase alpha/beta chains family. In terms of assembly, F-type ATPases have 2 components, CF(1) - the catalytic core - and CF(0) - the membrane proton channel. CF(1) has five subunits: alpha(3), beta(3), gamma(1), delta(1), epsilon(1). CF(0) has four main subunits: a(1), b(1), b'(1) and c(9-12).

The protein resides in the cell inner membrane. The catalysed reaction is ATP + H2O + 4 H(+)(in) = ADP + phosphate + 5 H(+)(out). Produces ATP from ADP in the presence of a proton gradient across the membrane. The alpha chain is a regulatory subunit. The sequence is that of ATP synthase subunit alpha from Chlorobium phaeobacteroides (strain DSM 266 / SMG 266 / 2430).